Consider the following 63-residue polypeptide: 2-hydroxymuconate tautomerase (63 aa).

Catalysis depends on Pro2, which acts as the Proton acceptor; via imino nitrogen.

This sequence belongs to the 4-oxalocrotonate tautomerase family. Homohexamer.

It carries out the reaction (2Z,4E)-2-hydroxyhexa-2,4-dienedioate = (3E)-2-oxohex-3-enedioate. It functions in the pathway aromatic compound metabolism; salicylate degradation. In terms of biological role, catalyzes the ketonization of 2-hydroxymuconate stereoselectively to yield 2-oxo-3-hexenedioate. The chain is 2-hydroxymuconate tautomerase (aphI) from Comamonas testosteroni (Pseudomonas testosteroni).